The sequence spans 451 residues: Lysine histidine transporter-like 3 (451 aa).

Topologically, residues 1–40 are cytoplasmic; the sequence is MKGIPSSSNQILNQDLVEDQSFELEDWLPITASRNANWYY. Residues 41-61 form a helical membrane-spanning segment; the sequence is SAFHNVTAIVGAGVLGLPYAM. Topologically, residues 62–63 are extracellular; it reads SE. A helical membrane pass occupies residues 64-84; sequence LGWGPGVVVLILSWVITLYTF. Topologically, residues 85–115 are cytoplasmic; sequence WQMIEMHEMFEGKRFDRYHELGQAAFGKKLG. A helical transmembrane segment spans residues 116–136; that stretch reads LYIVVPLQLLVETSACIVYMV. Topologically, residues 137–159 are extracellular; that stretch reads TGGESLKKIHQLSVGDYECRKLK. Residues 160–177 traverse the membrane as a helical segment; sequence VRHFILIFASSQFVLSLL. Topologically, residues 178-182 are cytoplasmic; that stretch reads KNFNS. The chain crosses the membrane as a helical span at residues 183 to 203; sequence ISGVSLVAAVMSMSYSTIAWV. Over 204-227 the chain is Extracellular; the sequence is ASLTKGVANNVEYGYKRRNNTSVP. Residues 228-248 form a helical membrane-spanning segment; that stretch reads LAFLGALGEMAFAYAGHNVVL. Topologically, residues 249–269 are cytoplasmic; it reads EIQATIPSTPENPSKRPMWKG. The chain crosses the membrane as a helical span at residues 270–290; the sequence is AIVAYIIVAFCYFPVALVGFW. The Extracellular portion of the chain corresponds to 291–309; the sequence is TFGNNVEENILKTLRGPKG. Residues 310–330 traverse the membrane as a helical segment; it reads LIIVANIFVIIHLMGSYQVYA. At 331–358 the chain is on the cytoplasmic side; it reads MPVFDMIESVMIKKWHFSPTRVLRFTIR. The helical transmembrane segment at 359 to 379 threads the bilayer; that stretch reads WTFVAATMGIAVALPHFSALL. Residue Ser380 is a topological domain, extracellular. Residues 381-401 form a helical membrane-spanning segment; the sequence is FFGGFIFAPTTYFIPCIIWLI. Residues 402–413 lie on the Cytoplasmic side of the membrane; it reads LKKPKRFSLSWC. A helical membrane pass occupies residues 414–434; that stretch reads INWICIILGVLVMIIAPIGGL. Over 435–451 the chain is Extracellular; sequence AKLMNALKQPDSSCKST.

This sequence belongs to the amino acid/polyamine transporter 2 family. Amino acid/auxin permease (AAAP) (TC 2.A.18.2) subfamily.

It is found in the cell membrane. Functionally, amino acid transporter. The polypeptide is Lysine histidine transporter-like 3 (Arabidopsis thaliana (Mouse-ear cress)).